Reading from the N-terminus, the 367-residue chain is Farnesyl pyrophosphate synthase (367 aa).

K71, R74, and Q110 together coordinate isopentenyl diphosphate. Residues D117 and D121 each coordinate Mg(2+). R126 lines the dimethylallyl diphosphate pocket. R127 provides a ligand contact to isopentenyl diphosphate. Dimethylallyl diphosphate-binding residues include K214, T215, Q254, K271, and K280.

The protein belongs to the FPP/GGPP synthase family. Homodimer. It depends on Mg(2+) as a cofactor.

Its subcellular location is the cytoplasm. The enzyme catalyses isopentenyl diphosphate + dimethylallyl diphosphate = (2E)-geranyl diphosphate + diphosphate. It carries out the reaction isopentenyl diphosphate + (2E)-geranyl diphosphate = (2E,6E)-farnesyl diphosphate + diphosphate. The protein operates within isoprenoid biosynthesis; farnesyl diphosphate biosynthesis; farnesyl diphosphate from geranyl diphosphate and isopentenyl diphosphate: step 1/1. Its pathway is isoprenoid biosynthesis; geranyl diphosphate biosynthesis; geranyl diphosphate from dimethylallyl diphosphate and isopentenyl diphosphate: step 1/1. Its function is as follows. Catalyzes the sequential condensation of isopentenyl pyrophosphate with the allylic pyrophosphates, dimethylallyl pyrophosphate, and then with the resultant geranylpyrophosphate to the ultimate product farnesyl pyrophosphate. The polypeptide is Farnesyl pyrophosphate synthase (FDPS) (Gallus gallus (Chicken)).